A 409-amino-acid chain; its full sequence is Pyrophosphate--fructose 6-phosphate 1-phosphotransferase (409 aa).

Diphosphate is bound at residue Gly-14. Asp-123 serves as a coordination point for Mg(2+). Substrate contacts are provided by residues 151-153 (TVD), 196-198 (MGR), Glu-268, and 325-328 (YFAR). Asp-153 serves as the catalytic Proton acceptor.

It belongs to the phosphofructokinase type A (PFKA) family. PPi-dependent PFK group II subfamily. Clade 'P' sub-subfamily. In terms of assembly, homodimer. Requires Mg(2+) as cofactor.

The protein resides in the cytoplasm. The catalysed reaction is beta-D-fructose 6-phosphate + diphosphate = beta-D-fructose 1,6-bisphosphate + phosphate + H(+). It participates in carbohydrate degradation; glycolysis; D-glyceraldehyde 3-phosphate and glycerone phosphate from D-glucose: step 3/4. Its activity is regulated as follows. Non-allosteric. Functionally, catalyzes the phosphorylation of D-fructose 6-phosphate, the first committing step of glycolysis. Uses inorganic phosphate (PPi) as phosphoryl donor instead of ATP like common ATP-dependent phosphofructokinases (ATP-PFKs), which renders the reaction reversible, and can thus function both in glycolysis and gluconeogenesis. Consistently, PPi-PFK can replace the enzymes of both the forward (ATP-PFK) and reverse (fructose-bisphosphatase (FBPase)) reactions. The protein is Pyrophosphate--fructose 6-phosphate 1-phosphotransferase of Methylomonas methanica.